The chain runs to 160 residues: Putative oxygenase ATEG_00330 (160 aa).

The EthD domain maps to 24–100 (HYFGTALHAK…RNIAADPEFA (77 aa)).

It belongs to the tpcK family.

In terms of biological role, putative oxygenase; part of the gene cluster that mediates the biosynthesis of isoflavipucine. The PKS part of the PKS-NRPS ATEG_00325 probably assembles a triketide from an acetyl starter and two malonyl-CoA extender units. The poly-beta-keto intermediate would then be fused to the leucine unit by the NRPS part. The resulting amide would be liberated from the PKS-NRPS through reductive release of the linear PKS-NRPS product from the enzyme complex. Further steps in isoflapucine synthesis include a cyclization step, an oxidation step, a hydrolysis step involving a trans-amidation, and an additional oxidation step, leading to flavipucine. Formation of isoflavipucine from flavipucine requires an unusual rearrangement. Alternative rearrangement reactions could build up rubrobramide, representing a branching of flavipucine biosynthesis. The enzymes involved in the post-PKS-NRPS steps have not been identified yet, but the putative oxygenases ATEG_003329 and ATEG_00330 encoded by the cluster could play a role. The protein is Putative oxygenase ATEG_00330 of Aspergillus terreus (strain NIH 2624 / FGSC A1156).